We begin with the raw amino-acid sequence, 486 residues long: MNDQSITVRGKDRYKSGVMEYKKMGYWEPSYQPNDTDVIALFRVTPQDGVDPVEACAAVAGESSTATWTVVWTDRLTAAEKYRAKCYRVEPVPGSPGSYFAYIAYDLDLFEPGSIANLTASIIGNVFGFKPLKALRLEDMRLPVAYVKTFQGPATGIVVERERLDKFGRPLLGATVKPKLGLSGRNYGRVVYEALKGGLDFTKDDENINSQPFMHWRERFLYCMEAVNKAQAATGEIKGTYLNVTAATMEDMYERAEFAKELGSNIIMIDLVIGYTAIQSMAKWSRKNDMILHLHRAGHSTYTRQRAHGVSFRVIAKWMRLAGVDHIHAGTVVGKLEGDPNTTRGYYDICREDFNPMRLEHGVFFDQHWASLNKLMPVASGGIHAGQMHQLLDLLGEDVVLQFGGGTIGHPRGIAAGATANRVALEAMILARNEGRDYVHEGPEILAKAAMTCTPLREALEIWKDVTFNYESTDSPDFVPTVTPAA.

Substrate-binding residues include Asn-125 and Thr-175. Lys-177 acts as the Proton acceptor in catalysis. Lys-179 provides a ligand contact to substrate. Lys-203, Asp-205, and Glu-206 together coordinate Mg(2+). Lys-203 is subject to N6-carboxylysine. Residue His-295 is the Proton acceptor of the active site. Substrate-binding residues include Arg-296, His-328, and Ser-380.

Belongs to the RuBisCO large chain family. Type I subfamily. Heterohexadecamer of 8 large chains and 8 small chains. The cofactor is Mg(2+).

The enzyme catalyses 2 (2R)-3-phosphoglycerate + 2 H(+) = D-ribulose 1,5-bisphosphate + CO2 + H2O. It catalyses the reaction D-ribulose 1,5-bisphosphate + O2 = 2-phosphoglycolate + (2R)-3-phosphoglycerate + 2 H(+). In terms of biological role, ruBisCO catalyzes two reactions: the carboxylation of D-ribulose 1,5-bisphosphate, the primary event in carbon dioxide fixation, as well as the oxidative fragmentation of the pentose substrate. Both reactions occur simultaneously and in competition at the same active site. This Bradyrhizobium sp. (strain ORS 278) protein is Ribulose bisphosphate carboxylase large chain 1.